The chain runs to 593 residues: MNELIKHKLELLPDSPGCYLHKDKNGTIIYVGKAKNLKNRVKSYFHGSHNTKTELLVSEIEDFEYIVTTSNTEALLLEINLIQENMPKYNIRLKDDKSYPYIKITNERYPRLMITRQVKKSDGTYFGPYPDSGAATEIKRLLDRLFPFKKCTNPANKVCFYYHLGQCNAHTVCQTNKAYWDSLREDVKQFLNGKDNKIVNGLTEKMKSAAMTMEFERAAEYRDLIEAISLLRTKQRVIHQDMKDRDVFGYFVDKGWMCVQVFFVRNGKLIQRDVNMFPYYNEPEEDFLTYIGQFYQDTKHFLPKEVFIPQDIDAKSVETIVGCKIVKPQRGEKKQLVNLAIKNARVSLQQKFDLLEKDIRKTHGAIENLGNLLNIPKPVRIEAFDNSNIQGTSPVAAMVVFVNGKPSKKDYRKFKIKTVIGPDDYASMREVIHRRYSRVLKDGLTPPDLIVIDGGQGQVNIARDVIENQLGLAIPIAGLQKNDKHQTHELLFGDPLEVVELPRNSEEFFLLHRIQDEVHRFAITFHRQLRSKNSFSSKLDGITGLGPKRKQLLMKHFKSLPNIQKAEIEDIIMCGIPRTVAESLRDSLNDPPK.

The 78-residue stretch at 14–91 folds into the GIY-YIG domain; sequence DSPGCYLHKD…IQENMPKYNI (78 aa). Residues 196–231 enclose the UVR domain; that stretch reads NKIVNGLTEKMKSAAMTMEFERAAEYRDLIEAISLL.

The protein belongs to the UvrC family. Interacts with UvrB in an incision complex.

Its subcellular location is the cytoplasm. Functionally, the UvrABC repair system catalyzes the recognition and processing of DNA lesions. UvrC both incises the 5' and 3' sides of the lesion. The N-terminal half is responsible for the 3' incision and the C-terminal half is responsible for the 5' incision. This is UvrABC system protein C from Streptococcus agalactiae serotype III (strain NEM316).